A 291-amino-acid chain; its full sequence is Pyridoxal 5'-phosphate synthase subunit PdxS (291 aa).

Asp-23 serves as a coordination point for D-ribose 5-phosphate. Lys-80 functions as the Schiff-base intermediate with D-ribose 5-phosphate in the catalytic mechanism. Gly-152 contributes to the D-ribose 5-phosphate binding site. A D-glyceraldehyde 3-phosphate-binding site is contributed by Arg-164. Residues Gly-213 and 234–235 (GS) contribute to the D-ribose 5-phosphate site.

The protein belongs to the PdxS/SNZ family. In the presence of PdxT, forms a dodecamer of heterodimers.

The catalysed reaction is aldehydo-D-ribose 5-phosphate + D-glyceraldehyde 3-phosphate + L-glutamine = pyridoxal 5'-phosphate + L-glutamate + phosphate + 3 H2O + H(+). It functions in the pathway cofactor biosynthesis; pyridoxal 5'-phosphate biosynthesis. Its function is as follows. Catalyzes the formation of pyridoxal 5'-phosphate from ribose 5-phosphate (RBP), glyceraldehyde 3-phosphate (G3P) and ammonia. The ammonia is provided by the PdxT subunit. Can also use ribulose 5-phosphate and dihydroxyacetone phosphate as substrates, resulting from enzyme-catalyzed isomerization of RBP and G3P, respectively. This Bifidobacterium longum (strain DJO10A) protein is Pyridoxal 5'-phosphate synthase subunit PdxS.